The primary structure comprises 37 residues: Potassium channel toxin alpha-KTx 2.19 (37 aa).

Cystine bridges form between Cys-7/Cys-28, Cys-13/Cys-33, and Cys-17/Cys-35.

Expressed by the venom gland.

The protein resides in the secreted. In terms of biological role, inhibitor of voltage-gated potassium channels. The chain is Potassium channel toxin alpha-KTx 2.19 from Rhopalurus junceus (Caribbean blue scorpion).